The sequence spans 845 residues: Cadherin-related family member 5 (845 aa).

Residues 1–25 form the signal peptide; that stretch reads MGSWALLWPPLLFTGLLVRPPGTMA. Residues 26–669 lie on the Extracellular side of the membrane; sequence QAQYCSVNKD…DKRFSVVDMA (644 aa). 7 N-linked (GlcNAc...) asparagine glycosylation sites follow: Asn44, Asn81, Asn140, Asn198, Asn297, Asn308, and Asn405. Cadherin domains follow at residues 71 to 124, 125 to 237, 249 to 354, and 355 to 459; these read FRIQ…APEF, PFKT…PPWF, IQAQ…PPRF, and PQRL…PPST. The interval 452-661 is disordered; the sequence is SEQEPPSTDV…SSGGGPSEDK (210 aa). The span at 506 to 518 shows a compositional bias: low complexity; that stretch reads SGTTLRPPTSSTP. An N-linked (GlcNAc...) asparagine glycan is attached at Asn526. 3 stretches are compositionally biased toward polar residues: residues 539–549, 556–594, and 602–611; these read TAQTPKPGTSQ, GTSTSHQPATPSGGTAQTPEPGTSQPMPPSMGTSTSHQP, and AQTPEAGTSQ. Tandem repeats lie at residues 540 to 570, 571 to 601, and 602 to 631. Residues 540 to 645 are 4 X 31 AA approximate tandem repeats; sequence AQTPKPGTSQ…PEPGTSQPMP (106 aa). A 4; truncated repeat occupies 632–645; sequence TAQTPEPGTSQPMP. Over residues 633-652 the composition is skewed to low complexity; sequence AQTPEPGTSQPMPLSKSTPS. A helical membrane pass occupies residues 670–690; it reads ALGGVLGALLLLALLGLAVLV. Over 691 to 845 the chain is Cytoplasmic; sequence HKHYGPRLKC…DAPGGDDSYI (155 aa). A mediates interaction with USH1C and MYO7B and is required for proper localization to microvilli tips and function in microvilli organization region spans residues 691–845; that stretch reads HKHYGPRLKC…DAPGGDDSYI (155 aa). The disordered stretch occupies residues 724-789; the sequence is ANWAPVPSPT…KERRPEGGYK (66 aa). Pro residues predominate over residues 729-762; that stretch reads VPSPTHDPKPAEAPMPAEPAPPGPASPGGAPEPP. Position 770 is a phosphoserine (Ser770). Position 810 is a phosphothreonine (Thr810). Positions 811–845 are disordered; the sequence is LDVDGASDSGSGDEGEGAGRGGGPYDAPGGDDSYI. Residues Ser817, Ser819, and Ser821 each carry the phosphoserine modification. Over residues 835–845 the composition is skewed to low complexity; sequence YDAPGGDDSYI.

In terms of assembly, part of the IMAC/intermicrovillar adhesion complex/intermicrovillar tip-link complex composed of ANKS4B, MYO7B, USH1C, CDHR2 and CDHR5. Interacts (via cytoplasmic domain) with USH1C and MYO7B; required for proper localization of CDHR5 to microvilli tips and its function in brush border differentiation. In terms of processing, N- and O-glycosylated. Highest expression in kidney, liver, colon and small intestine. In kidney, expressed apically along brush border of proximal convoluted tubule but not in cortical collecting ducts. Isoform 1 is expressed primarily in adult small intestine and colon. Isoform 2 is highly expressed in fetal liver. Expressed in duodenum with higher expression in enterocytes along the villus axis and lower expression in crypts (at protein level).

Its subcellular location is the apical cell membrane. The protein resides in the cell projection. It localises to the microvillus membrane. Intermicrovillar adhesion molecule that forms, via its extracellular domain, calcium-dependent heterophilic complexes with CDHR2 on adjacent microvilli. Thereby, controls the packing of microvilli at the apical membrane of epithelial cells. Through its cytoplasmic domain, interacts with microvillus cytoplasmic proteins to form the intermicrovillar adhesion complex/IMAC. This complex plays a central role in microvilli and epithelial brush border differentiation. The chain is Cadherin-related family member 5 from Homo sapiens (Human).